A 379-amino-acid chain; its full sequence is Probable homogentisate phytyltransferase 2, chloroplastic (379 aa).

The disordered stretch occupies residues 1–39 (MASLASPPLPCRAAATASRSGRPAPRLLGPPPPPASPLL). The transit peptide at 1–65 (MASLASPPLP…WSRRDAVRVC (65 aa)) directs the protein to the chloroplast. A run of 8 helical transmembrane segments spans residues 121 to 141 (WLVF…GYIV), 174 to 194 (LVVL…GPFI), 195 to 215 (TSLY…PFRL), 220 to 240 (VAAF…GVYY), 252 to 272 (WSSP…VIAI), 299 to 319 (IAFL…AVAF), 328 to 348 (TVMV…TWVL), and 361 to 378 (YYRF…FFPL).

This sequence belongs to the UbiA prenyltransferase family.

Its subcellular location is the plastid. The protein localises to the chloroplast thylakoid membrane. It carries out the reaction phytyl diphosphate + homogentisate + H(+) = 2-methyl-6-phytyl-1,4-benzene-1,4-diol + CO2 + diphosphate. It participates in cofactor biosynthesis; tocopherol biosynthesis. Functionally, involved in the synthesis of tocopherol (vitamin E). Catalyzes the condensation of homogentisate and phytyl diphosphate to form dimethylphytylhydrquinone. In Oryza sativa subsp. japonica (Rice), this protein is Probable homogentisate phytyltransferase 2, chloroplastic (HPT2).